Consider the following 375-residue polypeptide: Alcohol dehydrogenase 1 (375 aa).

An N-acetylalanine modification is found at Ala1. Residues Cys46, His68, Cys98, Cys101, Cys104, Cys112, and Cys175 each contribute to the Zn(2+) site. Residues 200 to 205 (GLGGVG), Asp224, Lys229, 293 to 295 (VGL), and Arg370 each bind NAD(+).

It belongs to the zinc-containing alcohol dehydrogenase family. Class-I subfamily. It depends on Zn(2+) as a cofactor.

The protein localises to the cytoplasm. The catalysed reaction is a primary alcohol + NAD(+) = an aldehyde + NADH + H(+). It catalyses the reaction a secondary alcohol + NAD(+) = a ketone + NADH + H(+). The polypeptide is Alcohol dehydrogenase 1 (Pelophylax perezi (Perez's frog)).